A 166-amino-acid chain; its full sequence is Large ribosomal subunit protein uL10 (166 aa).

It belongs to the universal ribosomal protein uL10 family. In terms of assembly, part of the ribosomal stalk of the 50S ribosomal subunit. The N-terminus interacts with L11 and the large rRNA to form the base of the stalk. The C-terminus forms an elongated spine to which L12 dimers bind in a sequential fashion forming a multimeric L10(L12)X complex.

In terms of biological role, forms part of the ribosomal stalk, playing a central role in the interaction of the ribosome with GTP-bound translation factors. In Lactobacillus johnsonii (strain CNCM I-12250 / La1 / NCC 533), this protein is Large ribosomal subunit protein uL10.